The primary structure comprises 866 residues: Probable beta-glucosidase F (866 aa).

Residues 1–20 (MAAFPAYLALLSYLVPGALS) form the signal peptide. Asn-65, Asn-73, and Asn-257 each carry an N-linked (GlcNAc...) asparagine glycan. The active site involves Asp-285. 8 N-linked (GlcNAc...) asparagine glycosylation sites follow: Asn-328, Asn-360, Asn-395, Asn-421, Asn-474, Asn-659, Asn-664, and Asn-724. The tract at residues 725-748 (SSKTYPYPDGYTTEPKPAPRAGGA) is disordered.

This sequence belongs to the glycosyl hydrolase 3 family.

It localises to the secreted. It carries out the reaction Hydrolysis of terminal, non-reducing beta-D-glucosyl residues with release of beta-D-glucose.. It participates in glycan metabolism; cellulose degradation. Its function is as follows. Beta-glucosidases are one of a number of cellulolytic enzymes involved in the degradation of cellulosic biomass. Catalyzes the last step releasing glucose from the inhibitory cellobiose. The sequence is that of Probable beta-glucosidase F (bglF) from Aspergillus oryzae (strain ATCC 42149 / RIB 40) (Yellow koji mold).